We begin with the raw amino-acid sequence, 545 residues long: CTP synthase (545 aa).

The interval 1–266 is amidoligase domain; it reads MTTNYIFVTG…DDYICKRFGL (266 aa). Position 14 (S14) interacts with CTP. S14 contacts UTP. ATP is bound by residues 15-20 and D72; that span reads SLGKGI. Mg(2+) is bound by residues D72 and E140. Residues 147–149, 187–192, and K223 each bind CTP; these read DIE and KTKPTQ. UTP contacts are provided by residues 187-192 and K223; that span reads KTKPTQ. ATP is bound at residue 239-241; that stretch reads KDV. Residues 291 to 542 enclose the Glutamine amidotransferase type-1 domain; the sequence is TIGMVGKYIA…VKAAGEYQKR (252 aa). Position 352 (G352) interacts with L-glutamine. Catalysis depends on C379, which acts as the Nucleophile; for glutamine hydrolysis. L-glutamine is bound by residues 380–383, E403, and R470; that span reads LGMQ. Residues H515 and E517 contribute to the active site.

This sequence belongs to the CTP synthase family. As to quaternary structure, homotetramer.

The catalysed reaction is UTP + L-glutamine + ATP + H2O = CTP + L-glutamate + ADP + phosphate + 2 H(+). The enzyme catalyses L-glutamine + H2O = L-glutamate + NH4(+). It carries out the reaction UTP + NH4(+) + ATP = CTP + ADP + phosphate + 2 H(+). The protein operates within pyrimidine metabolism; CTP biosynthesis via de novo pathway; CTP from UDP: step 2/2. With respect to regulation, allosterically activated by GTP, when glutamine is the substrate; GTP has no effect on the reaction when ammonia is the substrate. The allosteric effector GTP functions by stabilizing the protein conformation that binds the tetrahedral intermediate(s) formed during glutamine hydrolysis. Inhibited by the product CTP, via allosteric rather than competitive inhibition. Catalyzes the ATP-dependent amination of UTP to CTP with either L-glutamine or ammonia as the source of nitrogen. Regulates intracellular CTP levels through interactions with the four ribonucleotide triphosphates. This chain is CTP synthase, found in Sodalis glossinidius (strain morsitans).